The sequence spans 298 residues: UDP-N-acetylenolpyruvoylglucosamine reductase (298 aa).

The 166-residue stretch at 26–191 (KTGGPADWLA…LDATFALEPG (166 aa)) folds into the FAD-binding PCMH-type domain. R170 is an active-site residue. S220 serves as the catalytic Proton donor. E290 is a catalytic residue.

Belongs to the MurB family. Requires FAD as cofactor.

It is found in the cytoplasm. The enzyme catalyses UDP-N-acetyl-alpha-D-muramate + NADP(+) = UDP-N-acetyl-3-O-(1-carboxyvinyl)-alpha-D-glucosamine + NADPH + H(+). The protein operates within cell wall biogenesis; peptidoglycan biosynthesis. Cell wall formation. The polypeptide is UDP-N-acetylenolpyruvoylglucosamine reductase (Limosilactobacillus reuteri subsp. reuteri (strain JCM 1112) (Lactobacillus reuteri)).